A 138-amino-acid polypeptide reads, in one-letter code: Large ribosomal subunit protein uL16 (138 aa).

Positions 1 to 15 are enriched in basic residues; the sequence is MLSPRKVKYRKKQRG. The disordered stretch occupies residues 1-21; it reads MLSPRKVKYRKKQRGRLSGEA.

The protein belongs to the universal ribosomal protein uL16 family. Part of the 50S ribosomal subunit.

Binds 23S rRNA and is also seen to make contacts with the A and possibly P site tRNAs. The sequence is that of Large ribosomal subunit protein uL16 from Borrelia duttonii (strain Ly).